The primary structure comprises 175 residues: Myosin regulatory light chain 2, atrial isoform (175 aa).

The residue at position 2 (Ala-2) is an N-acetylalanine. A phosphoserine mark is found at Ser-22 and Ser-23. EF-hand domains follow at residues 32–67 (AQIQEFKEAFSCIDQNRDGIICKADLRETYSQLGKV), 102–137 (DPEEAILSAFRMFDPSGKGVVNKDEFKQLLLTQADK), and 138–173 (FSPAEVEQMFALTPMDLAGNIDYKSLCYIITHGDEK). Ca(2+)-binding residues include Asp-45, Asn-47, Asp-49, and Asp-56.

Myosin is a hexamer of 2 heavy chains and 4 light chains. As to expression, predominantly expressed in adult atrial muscle.

The chain is Myosin regulatory light chain 2, atrial isoform (MYL7) from Homo sapiens (Human).